The following is a 240-amino-acid chain: MEQPKYKRVVLKLSGEALAGKQGFGIQPAVIQSIAKQVKEVAELDVEIAIVVGGGNIWRGKTGSEMGMDRATADYMGMLATVMNALALQDSLEQLGVETRVQTSIEMRQVAEPYIRRRAIRHLEKKRVVIFAAGTGNPYFSTDTTAALRAAEIEADVILMAKNNVDGVYSADPNIDASAVKYDELSYLDVIQQGLGVMDSTASSLCMDNNIPLIVFSITEEGNIKRAVLGENIGTIVRGK.

12–15 lines the ATP pocket; that stretch reads KLSG. Residues 20 to 25 form an involved in allosteric activation by GTP region; the sequence is GKQGFG. G54 contributes to the UMP binding site. 2 residues coordinate ATP: G55 and R59. UMP-binding positions include D74 and 135–142; that span reads TGNPYFST. ATP contacts are provided by N163, Y169, and D172.

The protein belongs to the UMP kinase family. Homohexamer.

The protein resides in the cytoplasm. It catalyses the reaction UMP + ATP = UDP + ADP. Its pathway is pyrimidine metabolism; CTP biosynthesis via de novo pathway; UDP from UMP (UMPK route): step 1/1. Its activity is regulated as follows. Allosterically activated by GTP. Inhibited by UTP. Functionally, catalyzes the reversible phosphorylation of UMP to UDP. The chain is Uridylate kinase from Geobacillus thermodenitrificans (strain NG80-2).